The primary structure comprises 744 residues: MAKREDSPGPEVQPMDKQFLVCSICLDRYRCPKVLPCLHTFCERCLQNYIPPQSLTLSCPVCRQTSILPEQGVSALQNNFFISSLMEAMQQAPDGAHDPEDPHPLSAVAGRPLSCPNHEGKTMEFYCEACETAMCGECRAGEHREHGTVLLRDVVEQHKAALQRQLEAVRGRLPQLSAAIALVGGISQQLQERKAEALAQISAAFEDLEQALQQRKQALVSDLESICGAKQKVLQTQLDTLRQGQEHIGSSCSFAEQALRLGSAPEVLLVRKHMRERLAALAAQAFPERPHENAQLELVLEVDGLRRSVLNLGALLTTSAAAHETVATGEGLRQALVGQPASLTVTTKDKDGRLVRTGSAELCAEITGPDGMRLAVPVVDHKNGTYELVYTARTEGDLLLSVLLYGQPVRGSPFRVRALRPGDLPPSPDDVKRRVKSPGGPGSHVRQKAVRRPSSMYSTGGKRKDNPIVDELVFRVGSRGREKGEFTNLHPLSAASSGRIVVADSNNQCIQVFSNEGQFKFRFGVRGRSPGQLQRPTGVAVDTNGDIIVADYDNRWVSIFSPEGKFKTKIGAGRLMGPKGVAVDRNGHIIVVDNKSCCVFTFQPNGKLVGRFGGRGATDRHFAGPHFVAVNNKNEIVVTDFHNHSVKVYSADGEFLFKFGSHGEGNGQFNAPTGVAVDSNGNIIVADWGNSRIQVFDSSGSFLSYINTSAEPLYGPQGLALTSDGHVVVADAGNHCFKAYRYLQ.

Alanine 2 is modified (N-acetylalanine). The interaction with KIF21B stretch occupies residues 2-290 (AKREDSPGPE…LAAQAFPERP (289 aa)). Serine 7 bears the Phosphoserine mark. The RING-type zinc finger occupies 22–63 (CSICLDRYRCPKVLPCLHTFCERCLQNYIPPQSLTLSCPVCR). The segment at 110–151 (GRPLSCPNHEGKTMEFYCEACETAMCGECRAGEHREHGTVLL) adopts a B box-type zinc-finger fold. Positions 115, 118, 138, and 143 each coordinate Zn(2+). A coiled-coil region spans residues 153–224 (DVVEQHKAAL…RKQALVSDLE (72 aa)). One copy of the Filamin repeat lies at 317–418 (TTSAAAHETV…VRGSPFRVRA (102 aa)). Residues 420–462 (RPGDLPPSPDDVKRRVKSPGGPGSHVRQKAVRRPSSMYSTGGK) are disordered. Phosphoserine is present on serine 427. 6 NHL repeats span residues 473-516 (VFRV…FSNE), 520-563 (KFRF…FSPE), 564-605 (GKFK…FQPN), 609-652 (VGRF…YSAD), 656-699 (LFKF…FDSS), and 700-743 (GSFL…YRYL).

This sequence belongs to the TRIM/RBCC family. Forms homooligomers. Interacts with TRIM2; this interaction reduces TRIM2 activity. Associates with myosin-Vb (MYO5B) and alpha-actinin-4 (ACTN4). Component of the CART complex, at least composed of ACTN4, HGS/HRS, MYO5B and TRIM3. Interacts with ZFYVE28/LST2. Interacts with KIF21B. Highly expressed in the brain, moderate levels in the lung, very low levels in the liver, kidney and heart. In the brain, expression was highest in the cerebellum. Expression in the brain is found at low levels at embryonic day 15 and then increases during the first two postnatal weeks before decreasing through adulthood.

It localises to the cytoplasm. The protein localises to the early endosome. The protein resides in the golgi apparatus. It is found in the trans-Golgi network. Its subcellular location is the cell projection. It localises to the dendrite. The enzyme catalyses S-ubiquitinyl-[E2 ubiquitin-conjugating enzyme]-L-cysteine + [acceptor protein]-L-lysine = [E2 ubiquitin-conjugating enzyme]-L-cysteine + N(6)-ubiquitinyl-[acceptor protein]-L-lysine.. Its function is as follows. E3 ubiquitin ligase that plays essential roles in neuronal functions such as regulation of neuronal plasticity, learning, and memory. In addition to its neuronal functions, participates in other biological processes such as innate immunity or cell cycle regulation. Component of the cytoskeleton-associated recycling or transport complex in neurons, polyubiquitinates gamma-actin, thus regulating neuronal plasticity, learning, and memory. Ubiquitinates postsynaptic scaffold GKAP, a neuronal substrate involved in synaptic remodeling and thereby modulates dendritic spine morphology. Positively regulates motility of microtubule-dependent motor protein KIF21B. Induces growth arrest via its RING-dependent E3 ligase activity and ubiquinates CDKN1A. Positively regulates TLR3-mediated signaling by mediating 'Lys-63'-linked polyubiquitination of TLR3. In turn, promotes the recognition and sorting of polyubiquitinated TLR3 by the ESCRT complexes. The chain is Tripartite motif-containing protein 3 (Trim3) from Rattus norvegicus (Rat).